A 118-amino-acid polypeptide reads, in one-letter code: Large ribosomal subunit protein uL24 (118 aa).

It belongs to the universal ribosomal protein uL24 family. Part of the 50S ribosomal subunit.

Its function is as follows. One of two assembly initiator proteins, it binds directly to the 5'-end of the 23S rRNA, where it nucleates assembly of the 50S subunit. Functionally, one of the proteins that surrounds the polypeptide exit tunnel on the outside of the subunit. This Prochlorococcus marinus (strain MIT 9515) protein is Large ribosomal subunit protein uL24.